The primary structure comprises 993 residues: Lateral signaling target protein 2 homolog (993 aa).

Disordered regions lie at residues 340 to 449, 494 to 623, 759 to 813, and 825 to 902; these read DQRN…DTTD, DGYG…TVVQ, GARH…GDQE, and AVNE…PPAW. The span at 343-360 shows a compositional bias: low complexity; it reads NNNNNINNNSSSSSNSNS. Positions 372-405 are enriched in polar residues; it reads RSPSMLSLSTASPTPSHSIGSTFSAATSSTNPPV. The span at 409–448 shows a compositional bias: acidic residues; it reads DGDDADDDDDGDDDDEDDDDDVDDDLVGNDDSDDDDDDTT. A phosphoserine mark is found at Ser-525 and Ser-526. Residues 535–549 show a composition bias toward polar residues; sequence SHNNTTTIKSPDSDG. Positions 559–608 are enriched in basic residues; sequence SRQRHSHHHHRHHHHHHRHSSHSSHSHHHQHQQHHSQPHPHRTTRSGRKR. Low complexity predominate over residues 759 to 801; that stretch reads GARHSAGASMQRNHTTIDNNNSTSSSPPDATITTTTTTTTTRS. Phosphoserine is present on Ser-808. 2 stretches are compositionally biased toward low complexity: residues 842 to 862 and 884 to 896; these read SNTPSSASSSATSSSSEQNSP and TTATTTTTTGTGT. The segment at 905 to 965 adopts an FYVE-type zinc-finger fold; that stretch reads DGKAPRCMSC…VCRDCYAREI (61 aa). Residues Cys-911, Cys-914, Cys-927, Cys-930, Cys-935, Cys-938, Cys-957, and Cys-960 each coordinate Zn(2+). The interval 968–993 is disordered; that stretch reads SGGGGGGVVQMQRQQAANRPQTASAS. The segment covering 978-993 has biased composition (polar residues); sequence MQRQQAANRPQTASAS.

The protein belongs to the lst-2 family.

Functionally, negative regulator of epidermal growth factor receptor (EGFR) signaling. The protein is Lateral signaling target protein 2 homolog of Drosophila willistoni (Fruit fly).